Reading from the N-terminus, the 97-residue chain is Essential MCU regulator, mitochondrial (97 aa).

Residues 1–37 (MAARMGVLSVAGFRAAARAGGLLARPKQSTAVVPCRT) constitute a mitochondrion transit peptide. Residues 38–55 (VIASSAGAILPKPEKVSF) are Mitochondrial matrix-facing. The helical transmembrane segment at 56–75 (GLLRVFTVVIPFLYIGTLIS) threads the bilayer. The Mitochondrial intermembrane portion of the chain corresponds to 76–97 (KNFAAVLEEHDIFVPEDDDDDD).

This sequence belongs to the SMDT1/EMRE family. In terms of assembly, component of the uniplex complex.

The protein localises to the mitochondrion inner membrane. Essential regulatory subunit of the mitochondrial calcium uniporter complex (uniplex), a complex that mediates calcium uptake into mitochondria. Required to bridge the calcium-sensing proteins micu1 with the calcium-conducting subunit mcu. Acts by mediating activation of mcu and retention of micu1 to the mcu pore, in order to ensure tight regulation of the uniplex complex and appropriate responses to intracellular calcium signaling. The protein is Essential MCU regulator, mitochondrial of Xenopus laevis (African clawed frog).